Reading from the N-terminus, the 398-residue chain is Na(+)/H(+) antiporter NhaA (398 aa).

11 consecutive transmembrane segments (helical) span residues 14 to 34 (AAGV…NWSV), 60 to 80 (LLLW…GLEV), 96 to 116 (MLPL…FLLF), 125 to 145 (VGWA…LTLL), 155 to 175 (VFLL…IALF), 179 to 199 (QIFW…AYLN), 214 to 234 (IVLW…GVIV), 263 to 283 (FLII…GIVL), 292 to 312 (LGIA…LSWL), 330 to 350 (IVAV…ITLL), and 362 to 382 (YAKL…YLAL).

This sequence belongs to the NhaA Na(+)/H(+) (TC 2.A.33) antiporter family.

The protein localises to the cell inner membrane. It carries out the reaction Na(+)(in) + 2 H(+)(out) = Na(+)(out) + 2 H(+)(in). Na(+)/H(+) antiporter that extrudes sodium in exchange for external protons. The protein is Na(+)/H(+) antiporter NhaA of Pectobacterium carotovorum subsp. carotovorum (strain PC1).